Consider the following 710-residue polypeptide: uncharacterized protein (710 aa).

2 coiled-coil regions span residues 273–298 (LYRQ…MEEG) and 477–528 (RYEK…VADT).

This is an uncharacterized protein from Coxiella burnetii (strain RSA 493 / Nine Mile phase I).